Consider the following 870-residue polypeptide: Ribonucleoside-diphosphate reductase large subunit (870 aa).

The ATP-cone domain occupies 16 to 110 (MYVVKRDGTK…VSNLHKQTSK (95 aa)). Residues 20-21 (KR), 26-32 (ENVSFDK), Thr71, and Asp75 contribute to the ATP site. Ser235 is a binding site for GDP. An intrachain disulfide couples Cys236 to Cys463. Residues 244–246 (DSI), Lys261, Arg274, and 281–282 (RG) each bind dTTP. Asn446 serves as a coordination point for GDP. The Proton acceptor role is filled by Asn446. Cys448 acts as the Cysteine radical intermediate in catalysis. GDP is bound by residues Glu450 and 632-635 (TAST). Glu450 serves as the catalytic Proton acceptor. The tract at residues 789–854 (KPVENNINST…NNNEDDLANY (66 aa)) is disordered. Positions 796–811 (NSTTPLKTPTKTPNSS) are enriched in low complexity. A compositionally biased stretch (polar residues) spans 812–831 (NRISTSPTNNLTSPIRFNIT). Residues 832–844 (QQQQQQQQQQQQQ) are compositionally biased toward low complexity.

Belongs to the ribonucleoside diphosphate reductase large chain family. As to quaternary structure, heterodimer of a large and a small subunit.

Its subcellular location is the cytoplasm. The enzyme catalyses a 2'-deoxyribonucleoside 5'-diphosphate + [thioredoxin]-disulfide + H2O = a ribonucleoside 5'-diphosphate + [thioredoxin]-dithiol. With respect to regulation, under complex allosteric control mediated by deoxynucleoside triphosphates and ATP binding to separate specificity and activation sites on the large subunit. The type of nucleotide bound at the specificity site determines substrate preference. It seems probable that ATP makes the enzyme reduce CDP and UDP, dGTP favors ADP reduction and dTTP favors GDP reduction. Stimulated by ATP and inhibited by dATP binding to the activity site. In terms of biological role, provides the precursors necessary for DNA synthesis. Catalyzes the biosynthesis of deoxyribonucleotides from the corresponding ribonucleotides. The chain is Ribonucleoside-diphosphate reductase large subunit (rnrA) from Dictyostelium discoideum (Social amoeba).